Consider the following 188-residue polypeptide: GTP cyclohydrolase 1 (188 aa).

Positions 78, 81, and 150 each coordinate Zn(2+).

The protein belongs to the GTP cyclohydrolase I family. Toroid-shaped homodecamer, composed of two pentamers of five dimers.

It carries out the reaction GTP + H2O = 7,8-dihydroneopterin 3'-triphosphate + formate + H(+). Its pathway is cofactor biosynthesis; 7,8-dihydroneopterin triphosphate biosynthesis; 7,8-dihydroneopterin triphosphate from GTP: step 1/1. The sequence is that of GTP cyclohydrolase 1 from Halalkalibacterium halodurans (strain ATCC BAA-125 / DSM 18197 / FERM 7344 / JCM 9153 / C-125) (Bacillus halodurans).